Reading from the N-terminus, the 129-residue chain is 3-aminoacrylate deaminase RutC (129 aa).

This sequence belongs to the RutC family.

It carries out the reaction (Z)-3-aminoacrylate + H2O + H(+) = 3-oxopropanoate + NH4(+). Functionally, involved in pyrimidine catabolism. Catalyzes the deamination of 3-aminoacrylate to malonic semialdehyde, a reaction that can also occur spontaneously. RutC may facilitate the reaction and modulate the metabolic fitness, rather than catalyzing essential functions. The protein is 3-aminoacrylate deaminase RutC of Caulobacter sp. (strain K31).